Consider the following 143-residue polypeptide: Transcriptional regulator MraZ (143 aa).

2 SpoVT-AbrB domains span residues 5 to 47 (THHP…PRAE) and 76 to 119 (TDEQ…NAER).

This sequence belongs to the MraZ family. As to quaternary structure, forms oligomers.

It is found in the cytoplasm. The protein localises to the nucleoid. This is Transcriptional regulator MraZ from Saccharopolyspora erythraea (strain ATCC 11635 / DSM 40517 / JCM 4748 / NBRC 13426 / NCIMB 8594 / NRRL 2338).